The primary structure comprises 295 residues: Ankyrin repeat and SOCS box protein 17 (295 aa).

One copy of the ANK repeat lies at 146 to 176; that stretch reads SGITPLFYVAQTRQSNIFKILLQYGILEREK. Residues 232 to 295 form the SOCS box domain; that stretch reads LGRRPIISNW…RLQNYLNLEI (64 aa).

Belongs to the ankyrin SOCS box (ASB) family.

It functions in the pathway protein modification; protein ubiquitination. Functionally, may be a substrate-recognition component of a SCF-like ECS (Elongin-Cullin-SOCS-box protein) E3 ubiquitin-protein ligase complex which mediates the ubiquitination and subsequent proteasomal degradation of target proteins. The chain is Ankyrin repeat and SOCS box protein 17 (ASB17) from Macaca fascicularis (Crab-eating macaque).